We begin with the raw amino-acid sequence, 244 residues long: Orotidine 5'-phosphate decarboxylase (244 aa).

Residues D12, K34, 61-70 (DLKLFDIPNT), T125, R187, Q196, G216, and R217 each bind substrate. K63 serves as the catalytic Proton donor.

Belongs to the OMP decarboxylase family. Type 1 subfamily. Homodimer.

It carries out the reaction orotidine 5'-phosphate + H(+) = UMP + CO2. It participates in pyrimidine metabolism; UMP biosynthesis via de novo pathway; UMP from orotate: step 2/2. Catalyzes the decarboxylation of orotidine 5'-monophosphate (OMP) to uridine 5'-monophosphate (UMP). This is Orotidine 5'-phosphate decarboxylase from Dictyoglomus thermophilum (strain ATCC 35947 / DSM 3960 / H-6-12).